The following is a 33-amino-acid chain: Brevinin-2DYc (33 aa).

A disulfide bridge links Cys27 with Cys33.

In terms of tissue distribution, expressed by the skin glands.

The protein localises to the secreted. Its function is as follows. Antimicrobial peptide. A mixture of Brevinin-2DYc/2DYd is active against the Gram-positive bacterium S.aureus (MIC=15 uM) and the Gram-negative bacterium E.coli (MIC=15 uM). This chain is Brevinin-2DYc, found in Rana dybowskii (Dybovsky's frog).